The sequence spans 427 residues: Phosphatidylserine decarboxylase proenzyme 1, mitochondrial (427 aa).

Residues 1-77 constitute a mitochondrion transit peptide; the sequence is MRSYLRFSDR…RRFVYKLDQA (77 aa). Topologically, residues 78–88 are mitochondrial matrix; that stretch reads VTAALGPNGRY. The chain crosses the membrane as a helical span at residues 89-107; that stretch reads IAMVGMTASAVLLTFHYKF. Over 108 to 427 the chain is Mitochondrial intermembrane; it reads REVIAATDNV…TEDERLFAFY (320 aa). Catalysis depends on charge relay system; for autoendoproteolytic cleavage activity residues D210, H268, and S379. Catalysis depends on S379, which acts as the Schiff-base intermediate with substrate; via pyruvic acid; for decarboxylase activity. S379 bears the Pyruvic acid (Ser); by autocatalysis mark.

Belongs to the phosphatidylserine decarboxylase family. PSD-B subfamily. Eukaryotic type I sub-subfamily. Heterodimer of a large membrane-associated beta subunit and a small pyruvoyl-containing alpha subunit. Requires pyruvate as cofactor. Is synthesized initially as an inactive proenzyme. Formation of the active enzyme involves a self-maturation process in which the active site pyruvoyl group is generated from an internal serine residue via an autocatalytic post-translational modification. Two non-identical subunits are generated from the proenzyme in this reaction, and the pyruvate is formed at the N-terminus of the alpha chain, which is derived from the carboxyl end of the proenzyme. The autoendoproteolytic cleavage occurs by a canonical serine protease mechanism, in which the side chain hydroxyl group of the serine supplies its oxygen atom to form the C-terminus of the beta chain, while the remainder of the serine residue undergoes an oxidative deamination to produce ammonia and the pyruvoyl prosthetic group on the alpha chain. During this reaction, the Ser that is part of the protease active site of the proenzyme becomes the pyruvoyl prosthetic group, which constitutes an essential element of the active site of the mature decarboxylase.

The protein localises to the mitochondrion. It is found in the mitochondrion inner membrane. It carries out the reaction a 1,2-diacyl-sn-glycero-3-phospho-L-serine + H(+) = a 1,2-diacyl-sn-glycero-3-phosphoethanolamine + CO2. Its pathway is phospholipid metabolism; phosphatidylethanolamine biosynthesis; phosphatidylethanolamine from CDP-diacylglycerol: step 2/2. Its function is as follows. Catalyzes the formation of phosphatidylethanolamine (PtdEtn) from phosphatidylserine (PtdSer). Plays a central role in phospholipid metabolism and in the interorganelle trafficking of phosphatidylserine. In Toxoplasma gondii (strain ATCC 50853 / GT1), this protein is Phosphatidylserine decarboxylase proenzyme 1, mitochondrial.